Here is a 242-residue protein sequence, read N- to C-terminus: Large ribosomal subunit protein uL2 (242 aa).

Residues 201-242 are disordered; sequence VDHPFGGGRHQHTGKPTTVSRKKVPPGRKVGHISARRTGVRK. A compositionally biased stretch (basic residues) spans 220–242; that stretch reads SRKKVPPGRKVGHISARRTGVRK.

The protein belongs to the universal ribosomal protein uL2 family. As to quaternary structure, part of the 50S ribosomal subunit. Forms a bridge to the 30S subunit in the 70S ribosome.

Its function is as follows. One of the primary rRNA binding proteins. Required for association of the 30S and 50S subunits to form the 70S ribosome, for tRNA binding and peptide bond formation. It has been suggested to have peptidyltransferase activity; this is somewhat controversial. Makes several contacts with the 16S rRNA in the 70S ribosome. This is Large ribosomal subunit protein uL2 from Methanocaldococcus jannaschii (strain ATCC 43067 / DSM 2661 / JAL-1 / JCM 10045 / NBRC 100440) (Methanococcus jannaschii).